The chain runs to 1993 residues: [F-actin]-monooxygenase MICAL3 (1993 aa).

Residues 2 to 494 are monooxygenase domain; the sequence is EERKQETTNQ…RHLYDSGETK (493 aa). Residues C97, 116 to 118, 123 to 125, F183, Y298, and D398 contribute to the FAD site; these read EKR and RNN. The Calponin-homology (CH) domain occupies 518 to 624; sequence VARSSKLLGW…YLTQFYEMFK (107 aa). S649 carries the phosphoserine modification. The disordered stretch occupies residues 658–704; sequence GQTISRKRSPKDKKEKDSDGAGKRRKTSQSEEEEPPRSYKGERPTLV. The segment covering 669–679 has biased composition (basic and acidic residues); sequence DKKEKDSDGAG. 2 positions are modified to phosphoserine: S685 and S687. Residues 762 to 824 form the LIM zinc-binding domain; it reads DTCYFCQKRV…KPHYCYRLSG (63 aa). Positions 764, 767, 785, 788, 791, 794, 814, and 817 each coordinate Zn(2+). Residues 854 to 886 are disordered; the sequence is NGLASVAASSAERSPGTSMNGLEEPSIAKRLRG. Residues 860-873 show a composition bias toward polar residues; that stretch reads AASSAERSPGTSMN. Phosphothreonine is present on T887. 4 disordered regions span residues 905-1023, 1039-1309, 1332-1546, and 1559-1837; these read ELEE…RLQQ, WTHI…LSGP, IRRS…FFTP, and KENG…EELK. Acidic residues predominate over residues 938 to 951; sequence SEMEEEEEEDDEDD. Basic and acidic residues predominate over residues 975–988; the sequence is GRSEEELEASKNFE. S977 is subject to Phosphoserine. Acidic residues predominate over residues 989–1014; sequence PEEEEEEEEYEEEDEEYEEEEEEESS. Positions 1039–1051 are enriched in basic and acidic residues; the sequence is WTHIREREAEERM. Acidic residues predominate over residues 1065–1090; that stretch reads DEDDLEEDADSEPAETEGEAAEDGDP. The span at 1111-1148 shows a compositional bias: basic and acidic residues; that stretch reads EAEHRLQSQAKVKAELELRVSENEEEKPSDAPKQEERG. 2 positions are modified to phosphoserine: S1131 and S1187. Basic and acidic residues predominate over residues 1199–1212; the sequence is LREKPKAEVPEEQK. The segment covering 1230 to 1239 has biased composition (polar residues); that stretch reads SPTSPTSLQP. The segment covering 1245-1255 has biased composition (pro residues); it reads PPTPPTPPPTQ. Polar residues predominate over residues 1257-1275; sequence PICSQPQPSSDASIPSPTK. S1272 carries the phosphoserine modification. A Phosphothreonine modification is found at T1274. Phosphoserine occurs at positions 1276 and 1335. At T1339 the chain carries Phosphothreonine. A phosphoserine mark is found at S1369 and S1382. The span at 1405 to 1420 shows a compositional bias: basic and acidic residues; the sequence is PSDKELRSSQEERRDL. Residues 1421–1433 are compositionally biased toward low complexity; that stretch reads SSSSGLGLHDSSS. At S1431 the chain carries Phosphoserine. A compositionally biased stretch (polar residues) spans 1434–1452; the sequence is NMKTLGSQSFNTSDSTMLT. T1452 bears the Phosphothreonine mark. Residues 1454-1465 are compositionally biased toward pro residues; the sequence is PSSPPPPPPPNE. Over residues 1516–1530 the composition is skewed to acidic residues; that stretch reads SVDEIPFADDVEDTY. The span at 1584-1600 shows a compositional bias: basic and acidic residues; the sequence is EAKELAEERMRAREKSV. The span at 1623–1633 shows a compositional bias: polar residues; that stretch reads SSRSHTAQSQG. S1640 carries the phosphoserine modification. Residues 1665–1685 are compositionally biased toward low complexity; it reads SPPSDSGGPDGSVTSSEGSSG. Basic residues predominate over residues 1686–1704; the sequence is KSKKRSSLFSPRRNKKEKK. A phosphoserine mark is found at S1692 and S1695. Positions 1754 to 1763 are enriched in polar residues; the sequence is TPSSGATVDS. Residues 1795–1811 are compositionally biased toward basic and acidic residues; that stretch reads ILERSSQKSKREPRTYT. Positions 1817–1983 form a coiled coil; that stretch reads AKLTRRVQKA…EEDKDLEAAM (167 aa). Residues 1819–1830 are compositionally biased toward basic residues; sequence LTRRVQKAARRQ. In terms of domain architecture, bMERB spans 1832 to 1981; sequence KQEELKRLHR…EKEEDKDLEA (150 aa). S1903 is subject to Phosphoserine.

The protein belongs to the Mical family. In terms of assembly, interacts with RAB1B, RAB8A, RAB10, RAB13 and RAB15 (in their GTP-bound forms); binding to RAB1B is of low affinity compared to other Rab proteins; at least in case of RAB8A can bind 2 molecules of RAB8A simultaneously through a high and a low affinity binding site, respectively. Interacts with ERC1 and RAB8A; may bridge ERC1 with RAB8A. Interacts with KIF23 and ERC1; enhances the interaction between KIF23 and ERC1. Interacts with NINL. It depends on FAD as a cofactor.

The protein resides in the cytoplasm. It localises to the cell cortex. The protein localises to the cytoskeleton. It is found in the nucleus. Its subcellular location is the midbody. The protein resides in the spindle. It localises to the cilium basal body. It catalyses the reaction L-methionyl-[F-actin] + NADPH + O2 + H(+) = L-methionyl-(R)-S-oxide-[F-actin] + NADP(+) + H2O. Functionally, monooxygenase that promotes depolymerization of F-actin by mediating oxidation of specific methionine residues on actin to form methionine-sulfoxide, resulting in actin filament disassembly and preventing repolymerization. In the absence of actin, it also functions as a NADPH oxidase producing H(2)O(2). Seems to act as Rab effector protein and play a role in vesicle trafficking. Involved in exocytic vesicles tethering and fusion: the monooxygenase activity is required for this process and implicates RAB8A associated with exocytotic vesicles. Required for cytokinesis. Contributes to stabilization and/or maturation of the intercellular bridge independently of its monooxygenase activity. Promotes recruitment of Rab8 and ERC1 to the intercellular bridge, and together these proteins are proposed to function in timely abscission. The protein is [F-actin]-monooxygenase MICAL3 (Mical3) of Mus musculus (Mouse).